The following is a 563-amino-acid chain: Putative GMC-type oxidoreductase L128 (563 aa).

The signal sequence occupies residues 1–21; that stretch reads MTSSIVLKFFLIATLLVIANS. Residue 48 to 77 coordinates FAD; the sequence is DYVIVGGGAAGSVLLDKCISYGYKCTLIER. Residue His-504 is the Proton acceptor of the active site.

It belongs to the GMC oxidoreductase family. Requires FAD as cofactor.

This Acanthamoeba polyphaga mimivirus (APMV) protein is Putative GMC-type oxidoreductase L128.